The sequence spans 337 residues: MSIIVNQIVLHQLVKTSQDENTVQLKTHLRDELLPITAETEQMMLQLHQEYHNKTKAYGVFQETSNFAQILNRTLENDIDFLAFSHQSAELLRQELGKYSFANDGTLILCQYNFLATDYLFIALLDSRYSMLVDENLEIKQTHYLDITQFDIACRINLTELHLDAKSTRYLTFIKGRVGRKIADFFMDFLGAEEGLNPQVQNQCLLQAVSDYCQQADLTKEQTQAVKKQVFDYCKGQINVGEEIVVRELSANIPTLNEQSFVDFAVSQNYGLEENIPPVRTALKSLTKFSGSGKGITLSFDAELLNSRIFWDEATDSLTITGLPPNLRDQLQRQTKE.

The protein belongs to the YejK family.

It localises to the cytoplasm. It is found in the nucleoid. The sequence is that of Nucleoid-associated protein HS_0228 from Histophilus somni (strain 129Pt) (Haemophilus somnus).